A 121-amino-acid chain; its full sequence is Large ribosomal subunit protein uL22 (121 aa).

It belongs to the universal ribosomal protein uL22 family. As to quaternary structure, part of the 50S ribosomal subunit.

In terms of biological role, this protein binds specifically to 23S rRNA; its binding is stimulated by other ribosomal proteins, e.g. L4, L17, and L20. It is important during the early stages of 50S assembly. It makes multiple contacts with different domains of the 23S rRNA in the assembled 50S subunit and ribosome. Its function is as follows. The globular domain of the protein is located near the polypeptide exit tunnel on the outside of the subunit, while an extended beta-hairpin is found that lines the wall of the exit tunnel in the center of the 70S ribosome. In Arthrobacter sp. (strain FB24), this protein is Large ribosomal subunit protein uL22.